Consider the following 206-residue polypeptide: Ribosomal RNA small subunit methyltransferase G (206 aa).

Residues Gly74, Leu79, 125-126 (VE), and Arg140 each bind S-adenosyl-L-methionine.

The protein belongs to the methyltransferase superfamily. RNA methyltransferase RsmG family.

The protein resides in the cytoplasm. It carries out the reaction guanosine(527) in 16S rRNA + S-adenosyl-L-methionine = N(7)-methylguanosine(527) in 16S rRNA + S-adenosyl-L-homocysteine. Specifically methylates the N7 position of guanine in position 527 of 16S rRNA. This Shewanella baltica (strain OS223) protein is Ribosomal RNA small subunit methyltransferase G.